A 421-amino-acid chain; its full sequence is Nuclear speckle RNA-binding protein B (421 aa).

3 disordered regions span residues 1-64 (MDNR…VNIY), 86-114 (TGQT…MVDT), and 197-226 (TDPQ…GIPH). A compositionally biased stretch (pro residues) spans 33–44 (PLAPPHPQPQPP). Residues 89–103 (TSTSTTSSSSSSSTS) show a composition bias toward low complexity. The RRM domain occupies 323 to 409 (NTLYVEGLPS…KILRLQFFRN (87 aa)).

As to expression, isoform 1: Expressed in root meristems, lateral root primordia, root vascular tissues and cotyledon vascular tissues. Isoform 2: Expressed in root meristems, lateral root primordia and root vascular tissues.

It is found in the nucleus speckle. Its function is as follows. Alternative splicing (AS) regulator that binds to specific mRNAs and modulates auxin effects on the transcriptome. Displaced from its targets upon binding to AS competitor long non-coding RNA (ASCO-RNA). This chain is Nuclear speckle RNA-binding protein B, found in Arabidopsis thaliana (Mouse-ear cress).